A 456-amino-acid chain; its full sequence is Phosphomethylpyrimidine synthase (456 aa).

Residues Asn80, Met109, Tyr139, His175, 195–197, 236–239, and Glu275 each bind substrate; these read SRG and DSLR. His279 is a binding site for Zn(2+). Position 302 (Tyr302) interacts with substrate. His343 serves as a coordination point for Zn(2+). Positions 423, 426, and 431 each coordinate [4Fe-4S] cluster.

This sequence belongs to the ThiC family. [4Fe-4S] cluster serves as cofactor.

The catalysed reaction is 5-amino-1-(5-phospho-beta-D-ribosyl)imidazole + S-adenosyl-L-methionine = 4-amino-2-methyl-5-(phosphooxymethyl)pyrimidine + CO + 5'-deoxyadenosine + formate + L-methionine + 3 H(+). It functions in the pathway cofactor biosynthesis; thiamine diphosphate biosynthesis. In terms of biological role, catalyzes the synthesis of the hydroxymethylpyrimidine phosphate (HMP-P) moiety of thiamine from aminoimidazole ribotide (AIR) in a radical S-adenosyl-L-methionine (SAM)-dependent reaction. The chain is Phosphomethylpyrimidine synthase from Synechococcus sp. (strain ATCC 27144 / PCC 6301 / SAUG 1402/1) (Anacystis nidulans).